Here is a 65-residue protein sequence, read N- to C-terminus: VVYTDCTESGQNLCLCEDSNVCGEGNKCILGSNGEKNQCVTGEGTPKPQSHNDGDFEEIPEEYLQ.

An interaction with thrombin active site region spans residues 1–3; the sequence is VVY. 3 disulfides stabilise this stretch: Cys6–Cys14, Cys16–Cys28, and Cys22–Cys39. Positions 39–65 are disordered; that stretch reads CVTGEGTPKPQSHNDGDFEEIPEEYLQ. O-linked (GalNAc...) threonine glycosylation occurs at Thr45. Residues 55 to 65 form an interaction with fibrinogen-binding exosite of thrombin region; that stretch reads DFEEIPEEYLQ. Over residues 55–65 the composition is skewed to acidic residues; that stretch reads DFEEIPEEYLQ. Sulfotyrosine is present on Tyr63.

Belongs to the protease inhibitor I14 (hirudin) family.

The protein localises to the secreted. Its function is as follows. Hirudin is a potent thrombin-specific protease inhibitor. It forms a stable non-covalent complex with alpha-thrombin, thereby abolishing its ability to cleave fibrinogen. This chain is Hirudin-3A, found in Hirudo medicinalis (Medicinal leech).